The sequence spans 261 residues: MKKPVVLRGQNLSLQFASRQVLKQIDVAFCAGEVVALLGPNGAGKSSLLKLLSGEITSSQSIEYFGKAAKSWRSAALSRHLGLLPQSSSLTFPFLAREVVELGAIPLALSQAEVKAIAEKYMAITDVVHLADSLYPALSGGEKQRLHFARVLTQLDQSGDKKILMLDEPTSALDLAHQHNTLRVAKQFAKEQNACVIVVLHDLNLAAQYADRMVILHRGEIVVDASPEEALTPEIIDAVYGYKALIGRHPTLDFPLVQPAA.

The 237-residue stretch at 7 to 243 folds into the ABC transporter domain; sequence LRGQNLSLQF…EIIDAVYGYK (237 aa). ATP is bound at residue 39-46; that stretch reads GPNGAGKS.

The protein belongs to the ABC transporter superfamily. Heme (hemin) importer (TC 3.A.1.14.5) family. The complex is composed of two ATP-binding proteins (HmuV), two transmembrane proteins (HmuU) and a solute-binding protein (HmuT).

Its subcellular location is the cell inner membrane. Part of the ABC transporter complex HmuTUV involved in hemin import. Responsible for energy coupling to the transport system. This is Hemin import ATP-binding protein HmuV from Vibrio vulnificus (strain YJ016).